Consider the following 145-residue polypeptide: Secreted LysM effector Vd2LysM (145 aa).

A signal peptide spans 1–18; it reads MRPDVFVLFTAFLGPAAA. 2 consecutive LysM domains span residues 31 to 75 and 96 to 140; these read GWYI…KIKV and GWYH…DIVV.

Belongs to the secreted LysM effector family. As to quaternary structure, forms homodimers in a chitin-independent manner through interactions at the N-termini of EPL2 monomers. Homodimers are further polymerized in a chitin-dependent manner.

Functionally, secreted effector that enables the plant pathogenic fungus to manipulate host defenses for successful infection. Binds chitin, suppresses chitin-induced immune responses and protects hyphae against degradation by plant hydrolytic enzymes. Chitin-induced polymerization of homodimers forms a contiguous ELP2 highly oligomeric super-complexe that may precipitate at infection sites to eliminate chitin oligomers, and thus suppress the activation of chitin-induced plant immunity. This Verticillium dahliae (strain VdLs.17 / ATCC MYA-4575 / FGSC 10137) (Verticillium wilt) protein is Secreted LysM effector Vd2LysM.